Reading from the N-terminus, the 292-residue chain is MSMPATSTKTTKLATSLIDEYALLGWRAMLTEVNLSPKPGLVDRINCGAHKDMALEDFHRSALAIQGWLPRFIEFGACSAEMAPEAVLNGLRPIGMACEGDMFRATAGVNTHKGSIFSLGLLCAAIGRLLQLNQPVTPTTVCSTAASFCRGLTDRELRTNNARLTAGQRLYQQLGLTGARGEAEAGYPLVINHALPHYLTLLDQGLDPELALLDTLLLLMATNGDTNVASRGGEGGLRWLQREAQTLLQKGGIRTPADLDYLRQFDRECIERNLSPGGSADLLILTWFLAQI.

This sequence belongs to the CitG/MdcB family.

The enzyme catalyses 3'-dephospho-CoA + ATP = 2'-(5''-triphospho-alpha-D-ribosyl)-3'-dephospho-CoA + adenine. Functionally, catalyzes the formation of 2-(5''-triphosphoribosyl)-3'-dephosphocoenzyme-A, the precursor of the prosthetic group of the holo-acyl carrier protein (gamma chain) of citrate lyase, from ATP and dephospho-CoA. The sequence is that of 2-(5''-triphosphoribosyl)-3'-dephosphocoenzyme-A synthase from Escherichia coli O6:K15:H31 (strain 536 / UPEC).